The primary structure comprises 109 residues: Cortistatin (109 aa).

An N-terminal signal peptide occupies residues 1 to 25 (MMGGRGTGGKWPSAFGLLLLWGVAA). A propeptide spanning residues 26 to 93 (SALPLESGPT…PPPQQPPHLD (68 aa)) is cleaved from the precursor. Residues 64 to 97 (ASSSTPVGGGTPGLSKSQERPPPQQPPHLDKKPC) are disordered. Cys-97 and Cys-108 are oxidised to a cystine.

This sequence belongs to the somatostatin family. Expressed in a subset of GABAergic cells in the cortex and hippocampus.

It localises to the secreted. In Mus musculus (Mouse), this protein is Cortistatin (Cort).